A 136-amino-acid chain; its full sequence is Probable glycine cleavage system H protein 3 (136 aa).

Positions 28-109 (MVTVGITSLG…PYDAWIVKIK (82 aa)) constitute a Lipoyl-binding domain. Lys69 is subject to N6-lipoyllysine.

This sequence belongs to the GcvH family. In terms of assembly, the glycine cleavage system is composed of four proteins: P, T, L and H. It depends on (R)-lipoate as a cofactor.

Its function is as follows. The glycine cleavage system catalyzes the degradation of glycine. The H protein shuttles the methylamine group of glycine from the P protein to the T protein. This is Probable glycine cleavage system H protein 3 from Sulfurisphaera tokodaii (strain DSM 16993 / JCM 10545 / NBRC 100140 / 7) (Sulfolobus tokodaii).